A 401-amino-acid polypeptide reads, in one-letter code: Imidazolonepropionase (401 aa).

His70 and His72 together coordinate Fe(3+). His70 and His72 together coordinate Zn(2+). Residues Arg79, Tyr142, and His175 each coordinate 4-imidazolone-5-propanoate. Tyr142 contributes to the N-formimidoyl-L-glutamate binding site. Position 240 (His240) interacts with Fe(3+). Residue His240 participates in Zn(2+) binding. Gln243 is a binding site for 4-imidazolone-5-propanoate. Asp315 contacts Fe(3+). Asp315 contributes to the Zn(2+) binding site. Residues Asn317 and Gly319 each contribute to the N-formimidoyl-L-glutamate site. Thr320 provides a ligand contact to 4-imidazolone-5-propanoate.

Belongs to the metallo-dependent hydrolases superfamily. HutI family. Zn(2+) is required as a cofactor. It depends on Fe(3+) as a cofactor.

Its subcellular location is the cytoplasm. It catalyses the reaction 4-imidazolone-5-propanoate + H2O = N-formimidoyl-L-glutamate. It functions in the pathway amino-acid degradation; L-histidine degradation into L-glutamate; N-formimidoyl-L-glutamate from L-histidine: step 3/3. Catalyzes the hydrolytic cleavage of the carbon-nitrogen bond in imidazolone-5-propanoate to yield N-formimidoyl-L-glutamate. It is the third step in the universal histidine degradation pathway. This chain is Imidazolonepropionase, found in Caulobacter sp. (strain K31).